A 224-amino-acid chain; its full sequence is Urease accessory protein UreF (224 aa).

It belongs to the UreF family. As to quaternary structure, ureD, UreF and UreG form a complex that acts as a GTP-hydrolysis-dependent molecular chaperone, activating the urease apoprotein by helping to assemble the nickel containing metallocenter of UreC. The UreE protein probably delivers the nickel.

The protein localises to the cytoplasm. Required for maturation of urease via the functional incorporation of the urease nickel metallocenter. The protein is Urease accessory protein UreF of Pseudomonas fluorescens (strain ATCC BAA-477 / NRRL B-23932 / Pf-5).